A 438-amino-acid polypeptide reads, in one-letter code: Glutamate-1-semialdehyde 2,1-aminomutase (438 aa).

Residue Lys-277 is modified to N6-(pyridoxal phosphate)lysine.

Belongs to the class-III pyridoxal-phosphate-dependent aminotransferase family. HemL subfamily. Homodimer. Pyridoxal 5'-phosphate serves as cofactor.

It localises to the cytoplasm. The catalysed reaction is (S)-4-amino-5-oxopentanoate = 5-aminolevulinate. Its pathway is porphyrin-containing compound metabolism; protoporphyrin-IX biosynthesis; 5-aminolevulinate from L-glutamyl-tRNA(Glu): step 2/2. It functions in the pathway porphyrin-containing compound metabolism; chlorophyll biosynthesis. In Synechococcus sp. (strain CC9311), this protein is Glutamate-1-semialdehyde 2,1-aminomutase.